The primary structure comprises 632 residues: MAEETQHNKLAAAKKKLKEYWQKNRPRVPAGVNRNRKTNGSIPETATSGGCQPPGDSATGFHREGPTSSATLKDLESPCQERAVVLDSTSVKISRLKNTIKSLKQQKKQVEHQLEEEKKANNERQKAERELEVQIQTLIIQKEELNTDLYHMERSLRYFEEESKDLAVRLQHSLQCKGELESALSAVIATEKKKANQLSSCSKAHTEWELEQSLQDQALLKAQLTQLKESFQQLQLERDECAEHIEGERARWHQRMSKMSQEICTLKKEKQQDMRRVEELERSLSKLKNQMAEPLPPEPPAVPSEVELQHLRKELERVAGELQSQVKNNQHISLLNRRQEERIREQEERLRKQEERLQEQHEKLRQLAKPQSVFEELNNENKSTLQLEQQVKELQEKLGEEHLEAASQQNQQLTAQLSLMALPGEGHGGEHLDSEGEEAPQPMPSVPEDLESREAMSSFMDHLKEKADLSELVKKQELRFIQYWQERCHQKIHHLLSEPGGRAKDAALGGGHHQAGAQGGDEGEAAGAAADGIAAYSNYNNGHRKFLAAAHNSADEPGPGAPAPQELGAADKHGDLREVTLTSSAQGEAREDPLLDKPTAQPIVQDHQEHPGLGSNCCVPLFCWAWLPRRRR.

A disordered region spans residues 1 to 76 (MAEETQHNKL…TSSATLKDLE (76 aa)). Positions 38 to 50 (TNGSIPETATSGG) are enriched in polar residues. 2 coiled-coil regions span residues 85 to 150 (VLDS…TDLY) and 209 to 421 (ELEQ…SLMA). 3 disordered regions span residues 423–445 (PGEG…PMPS), 505–524 (DAAL…DEGE), and 552–573 (NSAD…ADKH). Gly residues predominate over residues 508–520 (LGGGHHQAGAQGG).

It belongs to the GOLGA8 family.

In Homo sapiens (Human), this protein is Golgin subfamily A member 8N.